A 274-amino-acid polypeptide reads, in one-letter code: Elongation factor Ts (274 aa).

Positions 82–85 are involved in Mg(2+) ion dislocation from EF-Tu; it reads TDFV.

It belongs to the EF-Ts family.

The protein localises to the cytoplasm. Associates with the EF-Tu.GDP complex and induces the exchange of GDP to GTP. It remains bound to the aminoacyl-tRNA.EF-Tu.GTP complex up to the GTP hydrolysis stage on the ribosome. This Flavobacterium psychrophilum (strain ATCC 49511 / DSM 21280 / CIP 103535 / JIP02/86) protein is Elongation factor Ts.